Reading from the N-terminus, the 274-residue chain is Acetyl-coenzyme A carboxylase carboxyl transferase subunit alpha (274 aa).

The 245-residue stretch at methionine 1–glycine 245 folds into the CoA carboxyltransferase C-terminal domain.

It belongs to the AccA family. Acetyl-CoA carboxylase is a heterohexamer composed of biotin carboxyl carrier protein (AccB), biotin carboxylase (AccC) and two subunits each of ACCase subunit alpha (AccA) and ACCase subunit beta (AccD).

The protein resides in the cytoplasm. The catalysed reaction is N(6)-carboxybiotinyl-L-lysyl-[protein] + acetyl-CoA = N(6)-biotinyl-L-lysyl-[protein] + malonyl-CoA. The protein operates within lipid metabolism; malonyl-CoA biosynthesis; malonyl-CoA from acetyl-CoA: step 1/1. Functionally, component of the acetyl coenzyme A carboxylase (ACC) complex. First, biotin carboxylase catalyzes the carboxylation of biotin on its carrier protein (BCCP) and then the CO(2) group is transferred by the carboxyltransferase to acetyl-CoA to form malonyl-CoA. The polypeptide is Acetyl-coenzyme A carboxylase carboxyl transferase subunit alpha (Clostridium acetobutylicum (strain ATCC 824 / DSM 792 / JCM 1419 / IAM 19013 / LMG 5710 / NBRC 13948 / NRRL B-527 / VKM B-1787 / 2291 / W)).